The primary structure comprises 313 residues: 7,8-didemethyl-8-hydroxy-5-deazariboflavin synthase (313 aa).

Residues 4 to 235 (ITYSPAYTLV…AEITLQIPPN (232 aa)) form the Radical SAM core domain. Positions 18, 22, and 25 each coordinate [4Fe-4S] cluster.

This sequence belongs to the radical SAM superfamily. CofG family. As to quaternary structure, consists of two subunits, CofG and CofH. [4Fe-4S] cluster serves as cofactor.

The enzyme catalyses 5-amino-5-(4-hydroxybenzyl)-6-(D-ribitylimino)-5,6-dihydrouracil + S-adenosyl-L-methionine = 7,8-didemethyl-8-hydroxy-5-deazariboflavin + 5'-deoxyadenosine + L-methionine + NH4(+) + H(+). The protein operates within cofactor biosynthesis; coenzyme F0 biosynthesis. Catalyzes the radical-mediated synthesis of 7,8-didemethyl-8-hydroxy-5-deazariboflavin from 5-amino-5-(4-hydroxybenzyl)-6-(D-ribitylimino)-5,6-dihydrouracil. This is 7,8-didemethyl-8-hydroxy-5-deazariboflavin synthase from Synechocystis sp. (strain ATCC 27184 / PCC 6803 / Kazusa).